The chain runs to 419 residues: Alpha-galactosidase A (419 aa).

Residues 1-31 (MKLLSRDTRLVCELALCPLALVFWSILGVRA) form the signal peptide. Cystine bridges form between C52/C94 and C56/C63. Residue N139 is glycosylated (N-linked (GlcNAc...) asparagine). A disulfide bond links C142 and C172. D170 functions as the Nucleophile in the catalytic mechanism. Residue Y186 is modified to Phosphotyrosine. N192 carries N-linked (GlcNAc...) asparagine glycosylation. A disulfide bridge links C202 with C223. 203 to 207 (EWPLY) serves as a coordination point for substrate. The N-linked (GlcNAc...) asparagine glycan is linked to N215. Residue D231 is the Proton donor of the active site. Residues C378 and C382 are joined by a disulfide bond.

Belongs to the glycosyl hydrolase 27 family. Homodimer.

It is found in the lysosome. It catalyses the reaction Hydrolysis of terminal, non-reducing alpha-D-galactose residues in alpha-D-galactosides, including galactose oligosaccharides, galactomannans and galactolipids.. It carries out the reaction a globoside Gb3Cer (d18:1(4E)) + H2O = a beta-D-Gal-(1-&gt;4)-beta-D-Glc-(1&lt;-&gt;1)-Cer(d18:1(4E)) + D-galactose. The enzyme catalyses a globoside Gb3Cer + H2O = a beta-D-galactosyl-(1-&gt;4)-beta-D-glucosyl-(1&lt;-&gt;1)-ceramide + D-galactose. With respect to regulation, galactosylgalactosylglucosylceramidase activity is stimulated by saposin B and ammonium chloride. Functionally, catalyzes the hydrolysis of glycosphingolipids and participates in their degradation in the lysosome. This is Alpha-galactosidase A from Mus musculus (Mouse).